A 273-amino-acid chain; its full sequence is 3-methyl-2-oxobutanoate hydroxymethyltransferase (273 aa).

D49 and D88 together coordinate Mg(2+). 3-methyl-2-oxobutanoate contacts are provided by residues 49-50 (DS), D88, and K118. Mg(2+) is bound at residue E120. The Proton acceptor role is filled by E187.

It belongs to the PanB family. As to quaternary structure, homodecamer; pentamer of dimers. Mg(2+) is required as a cofactor.

Its subcellular location is the cytoplasm. It carries out the reaction 3-methyl-2-oxobutanoate + (6R)-5,10-methylene-5,6,7,8-tetrahydrofolate + H2O = 2-dehydropantoate + (6S)-5,6,7,8-tetrahydrofolate. The protein operates within cofactor biosynthesis; (R)-pantothenate biosynthesis; (R)-pantoate from 3-methyl-2-oxobutanoate: step 1/2. Functionally, catalyzes the reversible reaction in which hydroxymethyl group from 5,10-methylenetetrahydrofolate is transferred onto alpha-ketoisovalerate to form ketopantoate. This chain is 3-methyl-2-oxobutanoate hydroxymethyltransferase, found in Rhizobium rhizogenes (strain K84 / ATCC BAA-868) (Agrobacterium radiobacter).